A 153-amino-acid chain; its full sequence is 6,7-dimethyl-8-ribityllumazine synthase (153 aa).

5-amino-6-(D-ribitylamino)uracil is bound by residues Phe22, 56-58 (AFE), and 80-82 (TVI). 85 to 86 (ST) lines the (2S)-2-hydroxy-3-oxobutyl phosphate pocket. The active-site Proton donor is His88. Phe113 lines the 5-amino-6-(D-ribitylamino)uracil pocket. (2S)-2-hydroxy-3-oxobutyl phosphate is bound at residue Arg127.

The protein belongs to the DMRL synthase family. In terms of assembly, forms an icosahedral capsid composed of 60 subunits, arranged as a dodecamer of pentamers.

The catalysed reaction is (2S)-2-hydroxy-3-oxobutyl phosphate + 5-amino-6-(D-ribitylamino)uracil = 6,7-dimethyl-8-(1-D-ribityl)lumazine + phosphate + 2 H2O + H(+). The protein operates within cofactor biosynthesis; riboflavin biosynthesis; riboflavin from 2-hydroxy-3-oxobutyl phosphate and 5-amino-6-(D-ribitylamino)uracil: step 1/2. In terms of biological role, catalyzes the formation of 6,7-dimethyl-8-ribityllumazine by condensation of 5-amino-6-(D-ribitylamino)uracil with 3,4-dihydroxy-2-butanone 4-phosphate. This is the penultimate step in the biosynthesis of riboflavin. This chain is 6,7-dimethyl-8-ribityllumazine synthase, found in Actinobacillus pleuropneumoniae serotype 5b (strain L20).